The following is a 262-amino-acid chain: Hydroxyethylthiazole kinase (262 aa).

Methionine 43 provides a ligand contact to substrate. Arginine 118 and threonine 164 together coordinate ATP. Alanine 191 contributes to the substrate binding site.

This sequence belongs to the Thz kinase family. The cofactor is Mg(2+).

The enzyme catalyses 5-(2-hydroxyethyl)-4-methylthiazole + ATP = 4-methyl-5-(2-phosphooxyethyl)-thiazole + ADP + H(+). The protein operates within cofactor biosynthesis; thiamine diphosphate biosynthesis; 4-methyl-5-(2-phosphoethyl)-thiazole from 5-(2-hydroxyethyl)-4-methylthiazole: step 1/1. Functionally, catalyzes the phosphorylation of the hydroxyl group of 4-methyl-5-beta-hydroxyethylthiazole (THZ). In Cereibacter sphaeroides (strain ATCC 17023 / DSM 158 / JCM 6121 / CCUG 31486 / LMG 2827 / NBRC 12203 / NCIMB 8253 / ATH 2.4.1.) (Rhodobacter sphaeroides), this protein is Hydroxyethylthiazole kinase.